The following is a 210-amino-acid chain: Large ribosomal subunit protein uL3 (210 aa).

The tract at residues 136-156 (THGTEKAHRSGGSIGNNTEPG) is disordered.

This sequence belongs to the universal ribosomal protein uL3 family. Part of the 50S ribosomal subunit. Forms a cluster with proteins L14 and L19.

Functionally, one of the primary rRNA binding proteins, it binds directly near the 3'-end of the 23S rRNA, where it nucleates assembly of the 50S subunit. The protein is Large ribosomal subunit protein uL3 of Solidesulfovibrio magneticus (strain ATCC 700980 / DSM 13731 / RS-1) (Desulfovibrio magneticus).